The sequence spans 130 residues: Large ribosomal subunit protein bL12 (130 aa).

This sequence belongs to the bacterial ribosomal protein bL12 family. Homodimer. Part of the ribosomal stalk of the 50S ribosomal subunit. Forms a multimeric L10(L12)X complex, where L10 forms an elongated spine to which 2 to 4 L12 dimers bind in a sequential fashion. Binds GTP-bound translation factors.

Forms part of the ribosomal stalk which helps the ribosome interact with GTP-bound translation factors. Is thus essential for accurate translation. This chain is Large ribosomal subunit protein bL12, found in Prochlorococcus marinus (strain SARG / CCMP1375 / SS120).